A 734-amino-acid polypeptide reads, in one-letter code: Photosystem I P700 chlorophyll a apoprotein A2 (734 aa).

8 consecutive transmembrane segments (helical) span residues 46–69 (IFAS…FHVA), 135–158 (LYSG…LHLQ), 175–199 (LNHH…HVAI), 273–291 (MAHH…GHMY), 330–353 (LHFQ…QHMY), 369–395 (AALY…IFFI), 417–439 (AIIS…LYVH), and 517–535 (FLVH…LILV). [4Fe-4S] cluster-binding residues include cysteine 559 and cysteine 568. 2 helical membrane passes run 575–596 (AFYL…YWHW) and 643–665 (LSVW…MFLI). Positions 654, 662, and 670 each coordinate chlorophyll a. Tryptophan 671 contacts phylloquinone. A helical transmembrane segment spans residues 707 to 727 (LVGLAHFSVGYIFTYAAFLIA).

The protein belongs to the PsaA/PsaB family. As to quaternary structure, the PsaA/B heterodimer binds the P700 chlorophyll special pair and subsequent electron acceptors. PSI consists of a core antenna complex that captures photons, and an electron transfer chain that converts photonic excitation into a charge separation. The eukaryotic PSI reaction center is composed of at least 11 subunits. P700 is a chlorophyll a/chlorophyll a' dimer, A0 is one or more chlorophyll a, A1 is one or both phylloquinones and FX is a shared 4Fe-4S iron-sulfur center. is required as a cofactor.

The protein localises to the plastid. It localises to the chloroplast thylakoid membrane. The enzyme catalyses reduced [plastocyanin] + hnu + oxidized [2Fe-2S]-[ferredoxin] = oxidized [plastocyanin] + reduced [2Fe-2S]-[ferredoxin]. Its function is as follows. PsaA and PsaB bind P700, the primary electron donor of photosystem I (PSI), as well as the electron acceptors A0, A1 and FX. PSI is a plastocyanin-ferredoxin oxidoreductase, converting photonic excitation into a charge separation, which transfers an electron from the donor P700 chlorophyll pair to the spectroscopically characterized acceptors A0, A1, FX, FA and FB in turn. Oxidized P700 is reduced on the lumenal side of the thylakoid membrane by plastocyanin. The protein is Photosystem I P700 chlorophyll a apoprotein A2 of Antirrhinum majus (Garden snapdragon).